Consider the following 410-residue polypeptide: Beta-arrestin-2 (410 aa).

Position 48 is a phosphotyrosine (Y48). Hydroxyproline; by PHD2 occurs at positions 176 and 181. Residues 241 to 410 (ADICLFSTAQ…KDDDCDDQFC (170 aa)) form an interaction with TRAF6 region. Phosphoserine is present on S361. The interval 378 to 410 (DTNYATDDDIVFEDFARLRLKGMKDDDCDDQFC) is interaction with AP2B1. Residue T383 is modified to Phosphothreonine; by CaMK2. The [DE]-X(1,2)-F-X-X-[FL]-X-X-X-R motif motif lies at 386 to 396 (DIVFEDFARLR).

It belongs to the arrestin family. As to quaternary structure, homooligomer; the self-association is mediated by InsP6-binding. Heterooligomer with ARRB1; the association is mediated by InsP6-binding. Interacts with ADRB2 and CHRM2. Interacts with PDE4A. Interacts with PDE4D. Interacts with MAPK10, MAPK1 and MAPK3. Interacts with DRD2. Interacts with FSHR. Interacts with CLTC. Interacts with HTR2C. Interacts with CCR5. Interacts with CXCR4. Interacts with SRC. Interacts with DUSP16; the interaction is interrupted by stimulation of AGTR1 and activation of MAPK10. Interacts with CHUK; the interaction is enhanced stimulation of ADRB2. Interacts with RELA. Interacts with MDM2; the interaction is enhanced by activation of GPCRs. Interacts with SLC9A5. Interacts with TRAF6. Interacts with IGF1R. Interacts with ENG. Interacts with KIR2DL1, KIR2DL3 and KIR2DL4. Interacts with LDLR. Interacts with AP2B1. Interacts with C5AR1. Interacts with RAF1. Interacts with MAP2K1. Interacts with MAPK1. Interacts with MAPK10; the interaction enhances MAPK10 activation by MAP3K5. Interacts with MAP2K4; the interaction is enhanced by presence of MAP3K5 and MAPK10. Interacts with MAP3K5. Interacts with AKT1. Interacts with IKBKB and MAP3K14. Interacts with SMO (activated). Interacts with GSK3A and GSK3B. Associates with protein phosphatase 2A (PP2A). Interacts with CXCR4; the interaction is dependent on C-terminal phosphorylation of CXCR4 and allows activation of MAPK1 and MAPK3. Interacts with GPR143. Interacts with HCK and CXCR1 (phosphorylated). Interacts with ACKR3 and ACKR4. Interacts with ARRDC1; the interaction is direct. Interacts with GPR61, GPR62 and GPR135. Interacts (via NACHT and LRR domains) with NLRP3; this interaction is direct and inducible by omega-3 polyunsaturated fatty acids (PUFAs). Interacts with FFAR4 (via C-terminus); this interaction is stimulated by long-chain fatty acids (LCFAs). Interacts with GPR35. Interacts with GPR84. Interacts with TIGIT; this interaction inhibits the NF-kappa-B pathway. Interacts with TGFBR3. Phosphorylated at Thr-383 in the cytoplasm; probably dephosphorylated at the plasma membrane. The phosphorylation does not regulate internalization and recycling of ADRB2, interaction with clathrin or AP2B1. Post-translationally, the ubiquitination status appears to regulate the formation and trafficking of beta-arrestin-GPCR complexes and signaling. Ubiquitination appears to occur GPCR-specific. Ubiquitinated by MDM2; the ubiquitination is required for rapid internalization of ADRB2. Deubiquitinated by USP33; the deubiquitination leads to a dissociation of the beta-arrestin-GPCR complex. Stimulation of a class A GPCR, such as ADRB2, induces transient ubiquitination and subsequently promotes association with USP33. Stimulation of a class B GPCR promotes a sustained ubiquitination. Deubiquitinated by USP20; allowing USP20 to deubiquitinate TRAF6 leading to inhibition of NF-kappa-B signaling. In terms of processing, hydroxylation by PHD2 modulates the rate of internalization by slowing down recruitment to the plasma membrane and inhibiting subsequent co-internalization with class A receptors. In terms of tissue distribution, predominantly localized in neuronal tissues and in the spleen.

The protein resides in the cytoplasm. It localises to the nucleus. The protein localises to the cell membrane. It is found in the membrane. Its subcellular location is the clathrin-coated pit. The protein resides in the cytoplasmic vesicle. Functionally, functions in regulating agonist-mediated G-protein coupled receptor (GPCR) signaling by mediating both receptor desensitization and resensitization processes. During homologous desensitization, beta-arrestins bind to the GPRK-phosphorylated receptor and sterically preclude its coupling to the cognate G-protein; the binding appears to require additional receptor determinants exposed only in the active receptor conformation. The beta-arrestins target many receptors for internalization by acting as endocytic adapters (CLASPs, clathrin-associated sorting proteins) and recruiting the GPRCs to the adapter protein 2 complex 2 (AP-2) in clathrin-coated pits (CCPs). However, the extent of beta-arrestin involvement appears to vary significantly depending on the receptor, agonist and cell type. Internalized arrestin-receptor complexes traffic to intracellular endosomes, where they remain uncoupled from G-proteins. Two different modes of arrestin-mediated internalization occur. Class A receptors, like ADRB2, OPRM1, ENDRA, D1AR and ADRA1B dissociate from beta-arrestin at or near the plasma membrane and undergo rapid recycling. Class B receptors, like AVPR2, AGTR1, NTSR1, TRHR and TACR1 internalize as a complex with arrestin and traffic with it to endosomal vesicles, presumably as desensitized receptors, for extended periods of time. Receptor resensitization then requires that receptor-bound arrestin is removed so that the receptor can be dephosphorylated and returned to the plasma membrane. Mediates endocytosis of CCR7 following ligation of CCL19 but not CCL21. Involved in internalization of P2RY1, P2RY4, P2RY6 and P2RY11 and ATP-stimulated internalization of P2RY2. Involved in phosphorylation-dependent internalization of OPRD1 and subsequent recycling or degradation. Involved in ubiquitination of IGF1R. Beta-arrestins function as multivalent adapter proteins that can switch the GPCR from a G-protein signaling mode that transmits short-lived signals from the plasma membrane via small molecule second messengers and ion channels to a beta-arrestin signaling mode that transmits a distinct set of signals that are initiated as the receptor internalizes and transits the intracellular compartment. Acts as a signaling scaffold for MAPK pathways such as MAPK1/3 (ERK1/2) and MAPK10 (JNK3). ERK1/2 and JNK3 activated by the beta-arrestin scaffold are largely excluded from the nucleus and confined to cytoplasmic locations such as endocytic vesicles, also called beta-arrestin signalosomes. Acts as a signaling scaffold for the AKT1 pathway. GPCRs for which the beta-arrestin-mediated signaling relies on both ARRB1 and ARRB2 (codependent regulation) include ADRB2, F2RL1 and PTH1R. For some GPCRs the beta-arrestin-mediated signaling relies on either ARRB1 or ARRB2 and is inhibited by the other respective beta-arrestin form (reciprocal regulation). Increases ERK1/2 signaling in AGTR1- and AVPR2-mediated activation (reciprocal regulation). Involved in CCR7-mediated ERK1/2 signaling involving ligand CCL19. Is involved in type-1A angiotensin II receptor/AGTR1-mediated ERK activity. Is involved in type-1A angiotensin II receptor/AGTR1-mediated MAPK10 activity. Is involved in dopamine-stimulated AKT1 activity in the striatum by disrupting the association of AKT1 with its negative regulator PP2A. Involved in AGTR1-mediated chemotaxis. Appears to function as signaling scaffold involved in regulation of MIP-1-beta-stimulated CCR5-dependent chemotaxis. Involved in attenuation of NF-kappa-B-dependent transcription in response to GPCR or cytokine stimulation by interacting with and stabilizing CHUK. Suppresses UV-induced NF-kappa-B-dependent activation by interacting with CHUK. The function is promoted by stimulation of ADRB2 and dephosphorylation of ARRB2. Involved in IL8-mediated granule release in neutrophils. Involved in p53/TP53-mediated apoptosis by regulating MDM2 and reducing the MDM2-mediated degradation of p53/TP53. May serve as nuclear messenger for GPCRs. Upon stimulation of OR1D2, may be involved in regulation of gene expression during the early processes of fertilization. Also involved in regulation of receptors other than GPCRs. Involved in endocytosis of TGFBR2 and TGFBR3 and down-regulates TGF-beta signaling such as NF-kappa-B activation. Involved in endocytosis of low-density lipoprotein receptor/LDLR. Involved in endocytosis of smoothened homolog/Smo, which also requires GRK2. Involved in endocytosis of SLC9A5. Involved in endocytosis of ENG and subsequent TGF-beta-mediated ERK activation and migration of epithelial cells. Involved in Toll-like receptor and IL-1 receptor signaling through the interaction with TRAF6 which prevents TRAF6 autoubiquitination and oligomerization required for activation of NF-kappa-B and JUN. Involved in insulin resistance by acting as insulin-induced signaling scaffold for SRC, AKT1 and INSR. Involved in regulation of inhibitory signaling of natural killer cells by recruiting PTPN6 and PTPN11 to KIR2DL1. Involved in the internalization of the atypical chemokine receptor ACKR3. Acts as an adapter protein coupling FFAR4 receptor to specific downstream signaling pathways, as well as mediating receptor endocytosis. During the activation step of NLRP3 inflammasome, directly associates with NLRP3 leading to inhibition of pro-inflammatory cytokine release and inhibition of inflammation. The protein is Beta-arrestin-2 (Arrb2) of Rattus norvegicus (Rat).